The following is a 558-amino-acid chain: Armadillo repeat-containing X-linked protein 5 (558 aa).

Composition is skewed to basic and acidic residues over residues 1–14 and 139–156; these read MVDSGTEARARGKA and KSHDKANTGSRPDRREET. 2 disordered regions span residues 1 to 35 and 139 to 165; these read MVDSGTEARARGKAEAGLQDGISGPATARVNGKTQ and KSHDKANTGSRPDRREETSIGMKSSDE. One copy of the ARM 1 repeat lies at 300–339; it reads CKSRGFSLEPKEFDKLVALLKLTKDPFIHEIATMIMGISP. The disordered stretch occupies residues 369 to 388; the sequence is HPGALSMVDDSSESSEEPKS. ARM repeat units follow at residues 422-461, 463-503, and 520-558; these read IKFEDHYVITSYIPDFLTLLNKGSVKTKFYVLKVFSCLSK, HANT…NINF, and SELISIFQEAKQFGQKLQDLAEHSDPEVRDKVIRLILKL.

This sequence belongs to the eutherian X-chromosome-specific Armcx family.

This Homo sapiens (Human) protein is Armadillo repeat-containing X-linked protein 5 (ARMCX5).